A 391-amino-acid chain; its full sequence is NAD(P)H-quinone oxidoreductase subunit H, chloroplastic (391 aa).

It belongs to the complex I 49 kDa subunit family. In terms of assembly, NDH is composed of at least 16 different subunits, 5 of which are encoded in the nucleus.

Its subcellular location is the plastid. It localises to the chloroplast thylakoid membrane. It catalyses the reaction a plastoquinone + NADH + (n+1) H(+)(in) = a plastoquinol + NAD(+) + n H(+)(out). The catalysed reaction is a plastoquinone + NADPH + (n+1) H(+)(in) = a plastoquinol + NADP(+) + n H(+)(out). Its function is as follows. NDH shuttles electrons from NAD(P)H:plastoquinone, via FMN and iron-sulfur (Fe-S) centers, to quinones in the photosynthetic chain and possibly in a chloroplast respiratory chain. The immediate electron acceptor for the enzyme in this species is believed to be plastoquinone. Couples the redox reaction to proton translocation, and thus conserves the redox energy in a proton gradient. The polypeptide is NAD(P)H-quinone oxidoreductase subunit H, chloroplastic (Chaetosphaeridium globosum (Charophycean green alga)).